A 687-amino-acid polypeptide reads, in one-letter code: Dictomallein (687 aa).

Disordered regions lie at residues methionine 1–leucine 45 and threonine 73–alanine 112. A Peptidase M66 domain is found at proline 233 to alanine 501. Histidine 393 contacts Zn(2+). The active site involves glutamate 394. Zn(2+)-binding residues include histidine 397 and histidine 403.

The protein belongs to the dictomallein family. Zn(2+) serves as cofactor.

The polypeptide is Dictomallein (dtmL) (Burkholderia pseudomallei (strain 668)).